The sequence spans 284 residues: Stomatin (284 aa).

The Cytoplasmic portion of the chain corresponds to 1-31 (MSDKRQSSHVQSQRIPESFRENSKTELGACG). Serine 18 is modified (phosphoserine). Cysteine 30 carries S-palmitoyl cysteine lipidation. Residues 32-52 (WILVAASFFFVIITFPISIWI) lie within the membrane without spanning it. Residues 53 to 284 (CIKIVKEYER…MLQGIMGSNH (232 aa)) are Cytoplasmic-facing. The S-palmitoyl cysteine moiety is linked to residue cysteine 87. A phosphoserine mark is found at serine 161 and serine 244. The tract at residues 265–273 (STIVFPLPV) is required for homooligomerization. Residues 267–269 (IVF) are required for lipid raft association. The interaction with LANCL1 stretch occupies residues 273–284 (VDMLQGIMGSNH).

This sequence belongs to the band 7/mec-2 family. Interacts with LANCL1. Interacts with SLC2A1. Interacts with SLC4A1; this interaction positively regulates SLC4A1 activity. Identified in large complexes with SLC40A1, SLC14A1, SLC29A1 and AQP1. Homodimer and higher order homooligomers. The homodimer is banana-shaped. Interacts with ASIC1, ASIC2 and ASIC3. Interacts with STOML1; may redistribute STOM from the plasma membrane to late endosomes. Expressed in all sensory neurons of the dorsal root ganglia. In the CNS, expressed in many neurons of the spinal cord, medulla and pons. Expressed only in scattered neurons in the cortex, hippocampus, thalamus and basal ganglia. In the cerebellum, expressed in all Purkinje cells (at protein level). Widely expressed with high levels in heart, liver, skeletal muscle and testis and low levels in lung, brain and spleen.

It localises to the cell membrane. The protein localises to the cytoplasm. The protein resides in the cytoskeleton. It is found in the membrane raft. Its subcellular location is the melanosome. It localises to the cytoplasmic vesicle. Regulates ion channel activity and transmembrane ion transport. Regulates ASIC2 and ASIC3 channel activity. This Mus musculus (Mouse) protein is Stomatin.